We begin with the raw amino-acid sequence, 545 residues long: Ribulokinase (545 aa).

The protein belongs to the ribulokinase family.

The enzyme catalyses D-ribulose + ATP = D-ribulose 5-phosphate + ADP + H(+). It carries out the reaction L-ribulose + ATP = L-ribulose 5-phosphate + ADP + H(+). It participates in carbohydrate degradation; L-arabinose degradation via L-ribulose; D-xylulose 5-phosphate from L-arabinose (bacterial route): step 2/3. The sequence is that of Ribulokinase from Staphylococcus aureus (strain MRSA252).